Consider the following 355-residue polypeptide: MARAVRAGILGASGMTGGELLRILASHPGVEVEWATSREYAGKPVHTAHPHLRGFYTGLKYTSIDKIDIGEVDVVFNALPHGVGASIVAEAYENGVRVVDLSADYRLRDQSLYPKLYGFKHPRPDLLEEAIYALPEIYGEKLRGARLAAVPGCNATAAILAAAPLVASKIIDMDVGIIVDVKAASSEAGSKPSRHSIHPLREGSARPYTPWGHRHAAEAVQVLRDLVGRGIRLSLVPHAVSMTRGVLASAHALLRDNIGFSEAVRAYASFYKDSQIVRVKPMAPGLPVDPPDVKNVIGSMFAEVGFAVEEESGRITGFAAIDNLVRGAAGQAVYAMNAMLGFDEWEGLRSPPLRP.

13 to 16 (SGMT) is a binding site for NADP(+). C153 is an active-site residue. N323 contributes to the NADP(+) binding site.

This sequence belongs to the NAGSA dehydrogenase family. Type 1 subfamily. LysY sub-subfamily.

The protein localises to the cytoplasm. It catalyses the reaction [amino-group carrier protein]-C-terminal-N-(1-carboxy-5-oxopentan-1-yl)-L-glutamine + phosphate + NADP(+) = [amino-group carrier protein]-C-terminal-N-(1-carboxy-5-phosphooxy-5-oxopentan-1-yl)-L-glutamine + NADPH + H(+). It carries out the reaction [amino-group carrier protein]-C-terminal-gamma-(L-glutamyl-5-semialdehyde)-L-glutamate + phosphate + NADP(+) = [amino-group carrier protein]-C-terminal-gamma-(5-phospho-L-glutamyl)-L-glutamate + NADPH + H(+). It participates in amino-acid biosynthesis; L-lysine biosynthesis via AAA pathway; L-lysine from L-alpha-aminoadipate (Thermus route): step 3/5. Its pathway is amino-acid biosynthesis; L-arginine biosynthesis. Functionally, involved in both the arginine and lysine biosynthetic pathways. The protein is Putative [LysW]-L-2-aminoadipate/[LysW]-L-glutamate phosphate reductase of Aeropyrum pernix (strain ATCC 700893 / DSM 11879 / JCM 9820 / NBRC 100138 / K1).